Consider the following 338-residue polypeptide: 1-aminocyclopropane-1-carboxylate deaminase (338 aa).

K51 bears the N6-(pyridoxal phosphate)lysine mark. The active-site Nucleophile is S78.

It belongs to the ACC deaminase/D-cysteine desulfhydrase family. As to quaternary structure, homotrimer. Pyridoxal 5'-phosphate is required as a cofactor.

The catalysed reaction is 1-aminocyclopropane-1-carboxylate + H2O = 2-oxobutanoate + NH4(+). Functionally, catalyzes a cyclopropane ring-opening reaction, the irreversible conversion of 1-aminocyclopropane-1-carboxylate (ACC) to ammonia and alpha-ketobutyrate. Allows growth on ACC as a nitrogen source. This chain is 1-aminocyclopropane-1-carboxylate deaminase, found in Variovorax paradoxus.